Here is a 1250-residue protein sequence, read N- to C-terminus: Minor capsid protein M1249L (1250 aa).

Belongs to the asfivirus M1249L family. In terms of assembly, interacts with the minor capsid protein p17 and with the hexon capsid protein p72 capsomers; these interactions form a rigid zipper structure that stabilizes the capsomers. Interacts with host IRF3.

The protein resides in the virion. It is found in the host cytoplasm. Together with the penton and the other minor capsid proteins (p17, p49), forms a complicated network immediately below the outer capsid shell, stabilizing the whole capsid. In addition, blocks IFN-beta transactivation mediated by the cGAS-STING pathway and regulates the transcriptional activity of IFN-beta. Mechanistically, suppresses the phosphorylation of host key adapter protein TBK1 and degrades host IRF3 in the cytoplasm. The sequence is that of Minor capsid protein M1249L from Ornithodoros (relapsing fever ticks).